Reading from the N-terminus, the 115-residue chain is Large ribosomal subunit protein bL19 (115 aa).

This sequence belongs to the bacterial ribosomal protein bL19 family.

Its function is as follows. This protein is located at the 30S-50S ribosomal subunit interface and may play a role in the structure and function of the aminoacyl-tRNA binding site. This chain is Large ribosomal subunit protein bL19, found in Lacticaseibacillus casei (strain BL23) (Lactobacillus casei).